A 77-amino-acid polypeptide reads, in one-letter code: Translation initiation factor IF-1, chloroplastic (77 aa).

In terms of domain architecture, S1-like spans 1 to 71 (MKEQKLIHEG…TRGRIIYRLR (71 aa)).

This sequence belongs to the IF-1 family. Component of the 30S ribosomal translation pre-initiation complex which assembles on the 30S ribosome in the order IF-2 and IF-3, IF-1 and N-formylmethionyl-tRNA(fMet); mRNA recruitment can occur at any time during PIC assembly.

The protein resides in the plastid. It localises to the chloroplast. Its function is as follows. One of the essential components for the initiation of protein synthesis. Stabilizes the binding of IF-2 and IF-3 on the 30S subunit to which N-formylmethionyl-tRNA(fMet) subsequently binds. Helps modulate mRNA selection, yielding the 30S pre-initiation complex (PIC). Upon addition of the 50S ribosomal subunit IF-1, IF-2 and IF-3 are released leaving the mature 70S translation initiation complex. This is Translation initiation factor IF-1, chloroplastic from Asarum canadense (Wild ginger).